Reading from the N-terminus, the 74-residue chain is ATP synthase subunit 9, mitochondrial (74 aa).

Helical transmembrane passes span 12–32 (LATIGLAGAGVGVGLVFAALI) and 50–70 (ILGFALTEAIGLFALMMAFLL).

Belongs to the ATPase C chain family. In terms of assembly, F-type ATPases have 2 components, CF(1) - the catalytic core - and CF(0) - the membrane proton channel. CF(1) has five subunits: alpha(3), beta(3), gamma(1), delta(1), epsilon(1). CF(0) has three main subunits: a, b and c.

Its subcellular location is the mitochondrion membrane. Mitochondrial membrane ATP synthase (F(1)F(0) ATP synthase or Complex V) produces ATP from ADP in the presence of a proton gradient across the membrane which is generated by electron transport complexes of the respiratory chain. F-type ATPases consist of two structural domains, F(1) - containing the extramembraneous catalytic core and F(0) - containing the membrane proton channel, linked together by a central stalk and a peripheral stalk. During catalysis, ATP synthesis in the catalytic domain of F(1) is coupled via a rotary mechanism of the central stalk subunits to proton translocation. Part of the complex F(0) domain. A homomeric c-ring of probably 10 subunits is part of the complex rotary element. This is ATP synthase subunit 9, mitochondrial from Rhizopus oryzae (Mucormycosis agent).